A 276-amino-acid chain; its full sequence is MPIKSYRPTTPTRRFQTVVSREDITKQTPEKSLVESKKRSGGRNSTGRVTSRFIGGGAKKAYRVVDFKRDKAGIPAVVAAIEYDPNRSSRIALLNYVDGEKRYILQPDGLKVGMKIMSGPNADILIGNALPLKNIPAGTIVHNIELKPGKGGQMARSAGSQAQLVSREGGLALLKLPSGEIRRVAVECMATVGQVGNVDHENVSLGKAGRKRWMGKTPHNRGVSMNPVDHPHGGGEGKTSGGRHPVTPWGQPTRGFKTRNNKRTDKWIVNRKSKKR.

Disordered stretches follow at residues 1-50 (MPIK…GRVT) and 206-276 (GKAG…SKKR). The segment covering 7 to 19 (RPTTPTRRFQTVV) has biased composition (polar residues). Residues 20-38 (SREDITKQTPEKSLVESKK) are compositionally biased toward basic and acidic residues.

This sequence belongs to the universal ribosomal protein uL2 family. As to quaternary structure, part of the 50S ribosomal subunit. Forms a bridge to the 30S subunit in the 70S ribosome.

Functionally, one of the primary rRNA binding proteins. Required for association of the 30S and 50S subunits to form the 70S ribosome, for tRNA binding and peptide bond formation. It has been suggested to have peptidyltransferase activity; this is somewhat controversial. Makes several contacts with the 16S rRNA in the 70S ribosome. This chain is Large ribosomal subunit protein uL2, found in Solibacter usitatus (strain Ellin6076).